The sequence spans 425 residues: Histidine--tRNA ligase (425 aa).

It belongs to the class-II aminoacyl-tRNA synthetase family. As to quaternary structure, homodimer.

Its subcellular location is the cytoplasm. The catalysed reaction is tRNA(His) + L-histidine + ATP = L-histidyl-tRNA(His) + AMP + diphosphate + H(+). This chain is Histidine--tRNA ligase, found in Histophilus somni (strain 2336) (Haemophilus somnus).